Reading from the N-terminus, the 731-residue chain is MSSVLRNQDNPPTISEVSSTTKENTDNSNSKQEEKEKEKEISSTIENPTFVDDEEDNNPFSHHGEGLTSFMTANSFNEGPNTKSDKRTTKENNNSSSNNNRGDNNDDDDDDSLLLYNTSNNNKSNNVSRVNPMLKSTGEVFKTVNMNFESRVTKLLKPNTKIRIQITEAGNSNEGMSNSSKKYTVYTIKLINLEDPNNDILTRRRYSDFESLRDVLTKIFPLIVIPPIPPKNYFDFSMLNGLVGSNHENSSLSVAGSNGNSGGSGGGGASGGAGSGSGNGSIITSPKTYSYINSTHLTKGKLIEHRKRLLTNFLNNCLEIKQIRSLEFFAKFLDPNANWGDEIALIQSQLPKSIYLSNPENGLKTDPIYSNLPNPSNKNTISFFKDNKKKLTKKTNKLLSNGSENHDIGVGGGGGSIGNGGNGVNGNGTNSQSQYIANTSMLDDINKRIMENYIGLSNDYSKLGSTFNSFSLILAETTTTTTTGVSSATKKSNDNELNLIFDKIGQVFDRSYITINSLIGELETKFSEPLGEIVQYTSIIHYVAKYQSKKIKQKSMLDNEIKDKRKTLEDLLKIERESNRIENAINSQVKPKNGKYNLEQQQSSTVSPAPPPGPPPSSSSSSSSSSKFKFPSFKKITQYVSEIIDQNPEVTRKQKITNLQEKIQILEKCQNIMLADLSFITDEVNKNIQSFQKRQLKMIYKILLLYNKQLIGWAKKNIDIWEEVRDEIAKM.

Polar residues predominate over residues 1–22 (MSSVLRNQDNPPTISEVSSTTK). The disordered stretch occupies residues 1–130 (MSSVLRNQDN…NNKSNNVSRV (130 aa)). Residues 31-41 (KQEEKEKEKEI) are compositionally biased toward basic and acidic residues. A compositionally biased stretch (polar residues) spans 69-82 (SFMTANSFNEGPNT). 2 stretches are compositionally biased toward low complexity: residues 92 to 102 (NNNSSSNNNRG) and 113 to 128 (LLLY…NNVS). The 177-residue stretch at 164–340 (IQITEAGNSN…KFLDPNANWG (177 aa)) folds into the PX domain. Positions 205, 207, and 231 each coordinate a 1,2-diacyl-sn-glycero-3-phospho-(1D-myo-inositol-3-phosphate). Residues 253–277 (SVAGSNGNSGGSGGGGASGGAGSGS) are disordered. A compositionally biased stretch (gly residues) spans 259 to 277 (GNSGGSGGGGASGGAGSGS). Arg-306 is an a 1,2-diacyl-sn-glycero-3-phospho-(1D-myo-inositol-3-phosphate) binding site. A disordered region spans residues 586-626 (NSQVKPKNGKYNLEQQQSSTVSPAPPPGPPPSSSSSSSSSS). The segment covering 608–617 (PAPPPGPPPS) has biased composition (pro residues).

The protein belongs to the sorting nexin family.

The protein resides in the endosome membrane. It is found in the preautophagosomal structure membrane. In terms of biological role, required for cytoplasm to vacuole transport (Cvt), pexophagy and mitophagy. Also involved in endoplasmic reticulum-specific autophagic process and is essential for the survival of cells subjected to severe ER stress. Functions in protein retrieval from the endocytic pathway. This is Autophagy-related protein 20 (ATG20) from Candida albicans (strain SC5314 / ATCC MYA-2876) (Yeast).